The chain runs to 226 residues: Peroxiredoxin-like 2C (226 aa).

Residues 1–24 (MAAPVTRQVSGCAGRVPSPAGSVT) form a disordered region.

The protein belongs to the peroxiredoxin-like PRXL2 family. PRXL2C subfamily.

Functionally, may positively regulate ERK1/2 signaling and AKT1 activation leading to HIF1A up-regulation with an increased expression of glycolysis genes and enhanced glycolysis. The chain is Peroxiredoxin-like 2C (Prxl2c) from Mus musculus (Mouse).